A 130-amino-acid chain; its full sequence is MAENQYYGTGRRKSSAARVFIKPGSGNIVINKRSLDEYFGRPTSRMVVKQPLELVELTEKLDLYVTVKGGGISGQAGAIRHGITRALMEYDESLRPTLRAAGYVTRDARCVERKKVGLRKARRRPQFSKR.

It belongs to the universal ribosomal protein uS9 family.

The chain is Small ribosomal subunit protein uS9 from Vibrio campbellii (strain ATCC BAA-1116).